Here is a 472-residue protein sequence, read N- to C-terminus: Succinate-semialdehyde dehydrogenase [NADP(+)] (472 aa).

NADP(+)-binding positions include 134–135 (WN), 158–161 (KHAS), and 210–211 (GS). The active-site Proton acceptor is the E232. L233 is an NADP(+) binding site. Catalysis depends on C266, which acts as the Nucleophile. An NADP(+)-binding site is contributed by E363.

This sequence belongs to the aldehyde dehydrogenase family.

The catalysed reaction is succinate semialdehyde + NADP(+) + H2O = succinate + NADPH + 2 H(+). In terms of biological role, catalyzes the NADP(+)-dependent oxidation of succinate semialdehyde to succinate. It is believed to be the main source of succinate semialdehyde dehydrogenase activity in Mycobacterium. This chain is Succinate-semialdehyde dehydrogenase [NADP(+)] (gabD1), found in Mycobacterium avium (strain 104).